The following is a 364-amino-acid chain: Melatonin receptor type 1B (364 aa).

The first 28 residues, 1–28, serve as a signal peptide directing secretion; it reads MPDNSSIANCCAASGLAARPSWPGSAEA. The Extracellular portion of the chain corresponds to 29–45; that stretch reads EPPETPRAPWVAPMLST. The chain crosses the membrane as a helical span at residues 46–66; that stretch reads VVIVTTAVDFVGNLLVILSVL. Residues 67–81 are Cytoplasmic-facing; that stretch reads RNRKLRNAGNLFVVN. The chain crosses the membrane as a helical span at residues 82 to 102; it reads LALADLVVALYPYPLILVAIL. Topologically, residues 103 to 115 are extracellular; it reads HDGWVLGEIHCKA. An intrachain disulfide couples C113 to C190. The helical transmembrane segment at 116–136 threads the bilayer; sequence SAFVMGLSVIGSVFNITAIAI. Over 137-158 the chain is Cytoplasmic; sequence NRYWCICHSATYHRACSQWHAP. A helical membrane pass occupies residues 159–179; that stretch reads LYISLIWLLTLVALVPNFFVG. Residues 180 to 200 lie on the Extracellular side of the membrane; the sequence is SLEYDPRIYSCTFIQTASTQY. A helical transmembrane segment spans residues 201–221; the sequence is TMAVVAIHFLLPIAVVSFCYL. Residues 222 to 255 lie on the Cytoplasmic side of the membrane; that stretch reads RIWILVLQARRKAKAERKLRLRPSDLRSFLTMFA. The chain crosses the membrane as a helical span at residues 256–276; it reads VFVVFAICWAPLNCIGLAVAI. Residues 277–287 lie on the Extracellular side of the membrane; the sequence is NPEAMALQIPE. The helical transmembrane segment at 288–308 threads the bilayer; the sequence is GLFVTSYFLAYFNSCLNAIVY. Over 309-364 the chain is Cytoplasmic; that stretch reads GLLNQNFRREYKRILSALWSTGRCFHDASKCHLTEDLQGPVPPAAMATIPVQEGAL.

It belongs to the G-protein coupled receptor 1 family. In terms of tissue distribution, expressed in the hippocampus, kidney, and ovary.

Its subcellular location is the cell membrane. Its function is as follows. High affinity receptor for melatonin. The activity of this receptor is mediated by pertussis toxin sensitive G proteins that inhibits adenylate cyclase activity. This Rattus norvegicus (Rat) protein is Melatonin receptor type 1B.